Here is a 368-residue protein sequence, read N- to C-terminus: Cobalt-precorrin-5B C(1)-methyltransferase (368 aa).

This sequence belongs to the CbiD family.

The catalysed reaction is Co-precorrin-5B + S-adenosyl-L-methionine = Co-precorrin-6A + S-adenosyl-L-homocysteine. It participates in cofactor biosynthesis; adenosylcobalamin biosynthesis; cob(II)yrinate a,c-diamide from sirohydrochlorin (anaerobic route): step 6/10. Catalyzes the methylation of C-1 in cobalt-precorrin-5B to form cobalt-precorrin-6A. This chain is Cobalt-precorrin-5B C(1)-methyltransferase, found in Brucella canis (strain ATCC 23365 / NCTC 10854 / RM-666).